A 231-amino-acid polypeptide reads, in one-letter code: LexA repressor (231 aa).

A DNA-binding region (H-T-H motif) is located at residues 28-48 (IREIGEALDIRSTNGVNDHLK). Active-site for autocatalytic cleavage activity residues include Ser149 and Lys186.

It belongs to the peptidase S24 family. In terms of assembly, homodimer.

The enzyme catalyses Hydrolysis of Ala-|-Gly bond in repressor LexA.. In terms of biological role, represses a number of genes involved in the response to DNA damage (SOS response), including recA and lexA. In the presence of single-stranded DNA, RecA interacts with LexA causing an autocatalytic cleavage which disrupts the DNA-binding part of LexA, leading to derepression of the SOS regulon and eventually DNA repair. The polypeptide is LexA repressor (Anaeromyxobacter sp. (strain Fw109-5)).